Here is a 467-residue protein sequence, read N- to C-terminus: ATP synthase subunit beta (467 aa).

150 to 157 (GGAGVGKT) contacts ATP.

This sequence belongs to the ATPase alpha/beta chains family. F-type ATPases have 2 components, CF(1) - the catalytic core - and CF(0) - the membrane proton channel. CF(1) has five subunits: alpha(3), beta(3), gamma(1), delta(1), epsilon(1). CF(0) has three main subunits: a(1), b(2) and c(9-12). The alpha and beta chains form an alternating ring which encloses part of the gamma chain. CF(1) is attached to CF(0) by a central stalk formed by the gamma and epsilon chains, while a peripheral stalk is formed by the delta and b chains.

The protein localises to the cell inner membrane. It catalyses the reaction ATP + H2O + 4 H(+)(in) = ADP + phosphate + 5 H(+)(out). In terms of biological role, produces ATP from ADP in the presence of a proton gradient across the membrane. The catalytic sites are hosted primarily by the beta subunits. The sequence is that of ATP synthase subunit beta from Aliivibrio fischeri (strain MJ11) (Vibrio fischeri).